A 183-amino-acid chain; its full sequence is Maltose O-acetyltransferase (183 aa).

Asparagine 83 is an acetyl-CoA binding site. Histidine 113 serves as the catalytic Proton donor/acceptor. Acetyl-CoA contacts are provided by residues glycine 140, serine 158, 163-164, arginine 178, and lysine 181; that span reads TK.

Belongs to the transferase hexapeptide repeat family. Homodimer.

It carries out the reaction D-maltose + acetyl-CoA = 1-O-acetylmaltose + CoA. Functionally, catalyzes the CoA-dependent transfer of an acetyl group to maltose and other sugars. Acetylates glucose exclusively at the C6 position and maltose at the C6 position of the non-reducing end glucosyl moiety. Is able to acetylate maltooligosaccharides. In Escherichia coli (strain K12), this protein is Maltose O-acetyltransferase (maa).